Reading from the N-terminus, the 356-residue chain is Leucine-rich repeat and transmembrane domain-containing protein 1 (356 aa).

A signal peptide spans 1–32 (MLNEGLCCGAWAMKGTLLLVSSVGLLLPGVGS). In terms of domain architecture, LRRNT spans 33-62 (CPMKCLCHPSSNSVDCSGQGLSKVPRDLPP). Residues 33 to 299 (CPMKCLCHPS…PTNLRHAVAT (267 aa)) lie on the Extracellular side of the membrane. LRR repeat units lie at residues 63–84 (WTVTLLLQDNRIHWLPALAFQS), 87–108 (LLSTLNLSNNSLSNLAAEAFYG), 111–132 (HLRVLNVTQNSLLSIESSFAHA), 135–156 (GLRELDLSSNSLRILPTSLGKP), and 159–180 (NLTVFAVQQNHLLHLDRELLEA). Residues N92 and N116 are each glycosylated (N-linked (GlcNAc...) asparagine). A glycan (N-linked (GlcNAc...) asparagine) is linked at N159. The LRRCT domain occupies 192–246 (NPWICDCHLLGLKLWLERFTFQGGETDGAICRLPEPWQGKALLSIPHELYQPCSL). Over residues 255-277 (LVQQPGSAPQDAQKSHENSSGQQ) the composition is skewed to polar residues. The tract at residues 255–288 (LVQQPGSAPQDAQKSHENSSGQQDPLECEAKPKP) is disordered. A helical transmembrane segment spans residues 300-320 (VVITGVVCGIVCLMMLAAAIY). The Cytoplasmic portion of the chain corresponds to 321-356 (GCTYAAITAQYQGRPLASARKSEKMGSKELMDSSSA).

The protein localises to the membrane. This is Leucine-rich repeat and transmembrane domain-containing protein 1 (Lrtm1) from Mus musculus (Mouse).